We begin with the raw amino-acid sequence, 453 residues long: Ribulose bisphosphate carboxylase large chain (453 aa).

The propeptide occupies 1-2 (MS). Residue P3 is modified to N-acetylproline. Residue K14 is modified to N6,N6,N6-trimethyllysine. Substrate is bound by residues N123 and T173. The active-site Proton acceptor is the K175. K177 contributes to the substrate binding site. 3 residues coordinate Mg(2+): K201, D203, and E204. Residue K201 is modified to N6-carboxylysine. The Proton acceptor role is filled by H294. Substrate is bound by residues R295, H327, and S379.

It belongs to the RuBisCO large chain family. Type I subfamily. Heterohexadecamer of 8 large chains and 8 small chains; disulfide-linked. The disulfide link is formed within the large subunit homodimers. Mg(2+) is required as a cofactor. Post-translationally, the disulfide bond which can form in the large chain dimeric partners within the hexadecamer appears to be associated with oxidative stress and protein turnover.

Its subcellular location is the plastid. The protein resides in the chloroplast. The enzyme catalyses 2 (2R)-3-phosphoglycerate + 2 H(+) = D-ribulose 1,5-bisphosphate + CO2 + H2O. The catalysed reaction is D-ribulose 1,5-bisphosphate + O2 = 2-phosphoglycolate + (2R)-3-phosphoglycerate + 2 H(+). Its function is as follows. RuBisCO catalyzes two reactions: the carboxylation of D-ribulose 1,5-bisphosphate, the primary event in carbon dioxide fixation, as well as the oxidative fragmentation of the pentose substrate in the photorespiration process. Both reactions occur simultaneously and in competition at the same active site. This chain is Ribulose bisphosphate carboxylase large chain, found in Crucianella angustifolia (Narrow-leaved crosswort).